A 453-amino-acid chain; its full sequence is Nuclear and cytoplasmic polyadenylated RNA-binding protein PUB1 (453 aa).

The segment at 1 to 67 is disordered; the sequence is MSENNEEQHQ…PSVVPANAIT (67 aa). Serine 2 bears the N-acetylserine mark. RRM domains are found at residues 75–152 and 162–240; these read RVLY…WAFQ and FNLF…WAAK. The interval 241-262 is disordered; that stretch reads RDNNNNNNYQQRRNYGNNNRGG. Over residues 244–262 the composition is skewed to low complexity; the sequence is NNNNNYQQRRNYGNNNRGG. The residue at position 260 (arginine 260) is an Omega-N-methylarginine. An RNA-binding RGG-box region spans residues 260 to 264; the sequence is RGGFR. Residues 341-413 form the RRM 3 domain; it reads TTAYIGNIPH…RNLRTGWGKE (73 aa). The tract at residues 419–453 is disordered; sequence PQQQQQGGQPLIMNDQQQPVMSEQQQQQQQQQQQQ. Residues 434-453 are compositionally biased toward low complexity; the sequence is QQQPVMSEQQQQQQQQQQQQ.

In terms of assembly, interacts with NAB2.

The protein resides in the cytoplasm. The protein localises to the nucleus. Its subcellular location is the P-body. It is found in the stress granule. Its function is as follows. May be associated with hnRNA within the nucleus and remains associated during nucleocytoplasmic mRNA transport, once the proteins are in the cytoplasm, disassembly of PUB1-RNA complexes may occur prior to PAB1 binding and formation of a translationally competent RNP complex. Binds to polyadenylated RNA; prefers to bind poly(rU); binds to T-rich single-stranded DNA. The protein is Nuclear and cytoplasmic polyadenylated RNA-binding protein PUB1 of Saccharomyces cerevisiae (strain ATCC 204508 / S288c) (Baker's yeast).